The primary structure comprises 419 residues: Probable pectate lyase C (419 aa).

The signal sequence occupies residues 1–19 (MRLTPSLISCLSLLHFTSA). 3 N-linked (GlcNAc...) asparagine glycosylation sites follow: asparagine 48, asparagine 164, and asparagine 201. Residue arginine 204 is part of the active site. One can recognise an EF-hand domain in the interval 261–296 (NENFHAYVETNYYDSDKDGTLNGSELGVDSTNYGGM). Aspartate 274, aspartate 276, aspartate 278, and threonine 280 together coordinate Ca(2+). An N-linked (GlcNAc...) asparagine glycan is attached at asparagine 282. Ca(2+) is bound at residue glutamate 285. The segment at 350–395 (ALISDEADMGGAGDLDQGTTPTDTDGDGIPDDAEAELGTDPNTADS) is disordered. Over residues 363 to 372 (DLDQGTTPTD) the composition is skewed to low complexity. Residues 373-386 (TDGDGIPDDAEAEL) show a composition bias toward acidic residues.

It belongs to the polysaccharide lyase 1 family. Requires Ca(2+) as cofactor.

The protein resides in the secreted. The catalysed reaction is Eliminative cleavage of (1-&gt;4)-alpha-D-galacturonan to give oligosaccharides with 4-deoxy-alpha-D-galact-4-enuronosyl groups at their non-reducing ends.. Functionally, pectinolytic enzyme consist of four classes of enzymes: pectin lyase, polygalacturonase, pectin methylesterase and rhamnogalacturonase. Among pectinolytic enzymes, pectin lyase is the most important in depolymerization of pectin, since it cleaves internal glycosidic bonds of highly methylated pectins. Favors pectate, the anion, over pectin, the methyl ester. The protein is Probable pectate lyase C (plyC) of Aspergillus flavus (strain ATCC 200026 / FGSC A1120 / IAM 13836 / NRRL 3357 / JCM 12722 / SRRC 167).